The primary structure comprises 211 residues: Transmembrane protein 247 (211 aa).

Basic and acidic residues-rich tracts occupy residues 1–10 (MAMEDREVME) and 31–45 (PEGKPKASLDAEVPK). The interval 1–90 (MAMEDREVME…AGDGPGLESV (90 aa)) is disordered. Residues 63–73 (PGPPRSLPPKS) show a composition bias toward pro residues. Residues 119 to 148 (KYLHQENERQRQHEEVMEQLQQQQQQQQAL) are a coiled coil. 2 consecutive transmembrane segments (helical) span residues 159–179 (LLLPQNQFAMFFYCFIFIHII) and 186–206 (VFFLFSKHYLFCLAAILLCLI).

The protein resides in the membrane. The chain is Transmembrane protein 247 (Tmem247) from Mus musculus (Mouse).